Here is a 351-residue protein sequence, read N- to C-terminus: Phosphoribosylformylglycinamidine cyclo-ligase (351 aa).

It belongs to the AIR synthase family.

The protein localises to the cytoplasm. It carries out the reaction 2-formamido-N(1)-(5-O-phospho-beta-D-ribosyl)acetamidine + ATP = 5-amino-1-(5-phospho-beta-D-ribosyl)imidazole + ADP + phosphate + H(+). Its pathway is purine metabolism; IMP biosynthesis via de novo pathway; 5-amino-1-(5-phospho-D-ribosyl)imidazole from N(2)-formyl-N(1)-(5-phospho-D-ribosyl)glycinamide: step 2/2. The chain is Phosphoribosylformylglycinamidine cyclo-ligase from Burkholderia ambifaria (strain ATCC BAA-244 / DSM 16087 / CCUG 44356 / LMG 19182 / AMMD) (Burkholderia cepacia (strain AMMD)).